Consider the following 257-residue polypeptide: Imidazole glycerol phosphate synthase subunit HisF (257 aa).

Residues aspartate 11 and aspartate 130 contribute to the active site.

It belongs to the HisA/HisF family. In terms of assembly, heterodimer of HisH and HisF.

Its subcellular location is the cytoplasm. It carries out the reaction 5-[(5-phospho-1-deoxy-D-ribulos-1-ylimino)methylamino]-1-(5-phospho-beta-D-ribosyl)imidazole-4-carboxamide + L-glutamine = D-erythro-1-(imidazol-4-yl)glycerol 3-phosphate + 5-amino-1-(5-phospho-beta-D-ribosyl)imidazole-4-carboxamide + L-glutamate + H(+). The protein operates within amino-acid biosynthesis; L-histidine biosynthesis; L-histidine from 5-phospho-alpha-D-ribose 1-diphosphate: step 5/9. IGPS catalyzes the conversion of PRFAR and glutamine to IGP, AICAR and glutamate. The HisF subunit catalyzes the cyclization activity that produces IGP and AICAR from PRFAR using the ammonia provided by the HisH subunit. In Actinobacillus succinogenes (strain ATCC 55618 / DSM 22257 / CCUG 43843 / 130Z), this protein is Imidazole glycerol phosphate synthase subunit HisF.